Reading from the N-terminus, the 291-residue chain is uncharacterized protein (291 aa).

Disordered regions lie at residues M1–K62, P220–V242, and E255–K291. Over residues E18 to S41 the composition is skewed to basic and acidic residues. 2 stretches are compositionally biased toward polar residues: residues E42–D58 and P226–P236. S267 is subject to Phosphoserine.

It localises to the cytoplasm. Its subcellular location is the nucleus. This is an uncharacterized protein from Saccharomyces cerevisiae (strain ATCC 204508 / S288c) (Baker's yeast).